Consider the following 1333-residue polypeptide: NPC1-like intracellular cholesterol transporter 1 (1333 aa).

Positions 1–20 are cleaved as a signal peptide; the sequence is MAAAWQGWLLWALLLNSAQG. The Extracellular portion of the chain corresponds to 21–284; the sequence is ELYTPTHKAG…SFYMGRMPGW (264 aa). Cystine bridges form between cysteine 32–cysteine 90, cysteine 38–cysteine 56, cysteine 77–cysteine 125, cysteine 91–cysteine 129, cysteine 113–cysteine 254, cysteine 116–cysteine 172, cysteine 189–cysteine 197, cysteine 243–cysteine 259, and cysteine 256–cysteine 263. Residues 285 to 305 traverse the membrane as a helical segment; the sequence is LALIIIFTAVFVLLSVVLVYL. Residues 306-352 are Cytoplasmic-facing; it reads RVASNRNKNKTAGSQEAPNLPRKRRFSPHTVLGRFFESWGTRVASWP. A helical transmembrane segment spans residues 353–373; it reads LTVLALSFIVVIALSVGLTFI. Residues 374–632 lie on the Extracellular side of the membrane; it reads ELTTDPVELW…DEINRTTIQD (259 aa). Intrachain disulfides connect cysteine 471-cysteine 485 and cysteine 525-cysteine 542. Positions 632-797 constitute an SSD domain; it reads DLPVFAISYL…MTAFVALLSL (166 aa). The chain crosses the membrane as a helical span at residues 633–653; sequence LPVFAISYLIVFLYISLALGS. Over 654–665 the chain is Cytoplasmic; that stretch reads YSRWSRVAVDSK. A helical transmembrane segment spans residues 666-686; the sequence is ATLGLGGVAVVLGAVVAAMGF. The Extracellular portion of the chain corresponds to 687-696; the sequence is YSYLGVPSSL. The helical transmembrane segment at 697–717 threads the bilayer; it reads VIIQVVPFLVLAVGADNIFIF. Residues 718–742 are Cytoplasmic-facing; the sequence is VLEYQRLPRMPGEQREAHIGRTLGS. The helical transmembrane segment at 743 to 763 threads the bilayer; it reads VAPSMLLCSLSEAICFFLGAL. Residues 764-776 lie on the Extracellular side of the membrane; it reads TSMPAVRTFALTS. The chain crosses the membrane as a helical span at residues 777–797; the sequence is GLAIIFDFLLQMTAFVALLSL. Topologically, residues 798 to 846 are cytoplasmic; sequence DSKRQEASRPDVVCCFSSRNLPPPKQKEGLLLCFFRKIYTPFLLHRFIR. A helical transmembrane segment spans residues 847–867; sequence PVVLLLFLVLFGANLYLMCNI. Over 868 to 1113 the chain is Extracellular; the sequence is SVGLDQDLAL…QQYLTVLPEG (246 aa). Intrachain disulfides connect cysteine 920-cysteine 925, cysteine 967-cysteine 1025, and cysteine 981-cysteine 990. Residues 1114–1134 form a helical membrane-spanning segment; it reads IFTLALCFVPTFVVCYLLLGL. Topologically, residues 1135-1142 are cytoplasmic; sequence DIRSGILN. The helical transmembrane segment at 1143-1163 threads the bilayer; the sequence is LLSIIMILVDTIGLMAVWGIS. Over 1164–1165 the chain is Extracellular; sequence YN. A helical transmembrane segment spans residues 1166 to 1186; that stretch reads AVSLINLVTAVGMSVEFVSHI. The Cytoplasmic segment spans residues 1187-1206; the sequence is TRSFAVSTKPTRLERAKDAT. Residues 1207–1227 traverse the membrane as a helical segment; that stretch reads IFMGSAVFAGVAMTNFPGILI. At 1228–1242 the chain is on the extracellular side; sequence LGFAQAQLIQIFFFR. A helical membrane pass occupies residues 1243–1263; sequence LNLLITLLGLLHGLVFLPVVL. The Cytoplasmic portion of the chain corresponds to 1264–1333; that stretch reads SYLGPDVNQA…SSLPKSDQKF (70 aa).

It belongs to the patched family. As to quaternary structure, interacts with RAB11A, MYO5B and RAB11FIP2. Interaction with RAB11A, MYO5B and RAB11FIP2 is required for proper transport to the plasma membrane upon cholesterol depletion. Interacts with NPC2. Interacts with LIMA1. Highly glycosylated. In terms of tissue distribution, expressed in small intestine, stomach and muscle, along with detectable expression in lung, heart, gall bladder, brain, testis, skin and liver. Expression in liver is extremely low.

The protein resides in the apical cell membrane. Its subcellular location is the cell membrane. The enzyme catalyses cholesterol(in) = cholesterol(out). It carries out the reaction sitosterol(out) = sitosterol(in). Functionally, plays a major role in cholesterol homeostasis. Critical for the uptake of cholesterol across the plasma membrane of the intestinal enterocyte. Involved in plant sterol absorption, it transports sitosterol, although at lower rates than cholesterol. May have a function in the transport of multiple lipids and their homeostasis, thereby influencing lipid metabolism regulation. May be involved in caveolin trafficking from the plasma membrane. Acts as a negative regulator of NPC2 and down-regulates its expression and secretion by inhibiting its maturation and accelerating its degradation. The sequence is that of NPC1-like intracellular cholesterol transporter 1 from Mus musculus (Mouse).